The chain runs to 109 residues: Spermidine export protein MdtI (109 aa).

4 helical membrane-spanning segments follow: residues 6–26 (FYPIAFLILAVMLEIVANILL), 36–56 (WLGILSLLSVLGAFSALAQAV), 64–84 (AYALWGGFGIAATVAAGWILF), and 88–108 (LNYKGWIGLILLLAGMVMIKL).

This sequence belongs to the drug/metabolite transporter (DMT) superfamily. Small multidrug resistance (SMR) (TC 2.A.7.1) family. MdtI subfamily. Forms a complex with MdtJ.

Its subcellular location is the cell inner membrane. In terms of biological role, catalyzes the excretion of spermidine. In Yersinia pseudotuberculosis serotype O:1b (strain IP 31758), this protein is Spermidine export protein MdtI.